The primary structure comprises 104 residues: Large ribosomal subunit protein uL24 (104 aa).

It belongs to the universal ribosomal protein uL24 family. As to quaternary structure, part of the 50S ribosomal subunit.

Its function is as follows. One of two assembly initiator proteins, it binds directly to the 5'-end of the 23S rRNA, where it nucleates assembly of the 50S subunit. One of the proteins that surrounds the polypeptide exit tunnel on the outside of the subunit. The protein is Large ribosomal subunit protein uL24 of Salmonella paratyphi A (strain ATCC 9150 / SARB42).